Here is a 181-residue protein sequence, read N- to C-terminus: Alkyl hydroperoxide reductase AhpD (181 aa).

Cys-130 functions as the Proton donor in the catalytic mechanism. Cys-130 and Cys-133 are joined by a disulfide. Cys-133 (cysteine sulfenic acid (-SOH) intermediate) is an active-site residue.

The protein belongs to the AhpD family.

It catalyses the reaction N(6)-[(R)-dihydrolipoyl]-L-lysyl-[lipoyl-carrier protein] + a hydroperoxide = N(6)-[(R)-lipoyl]-L-lysyl-[lipoyl-carrier protein] + an alcohol + H2O. Its function is as follows. Antioxidant protein with alkyl hydroperoxidase activity. Required for the reduction of the AhpC active site cysteine residues and for the regeneration of the AhpC enzyme activity. This chain is Alkyl hydroperoxide reductase AhpD, found in Gluconacetobacter diazotrophicus (strain ATCC 49037 / DSM 5601 / CCUG 37298 / CIP 103539 / LMG 7603 / PAl5).